The chain runs to 113 residues: Iron-sulfur cluster insertion protein ErpA (113 aa).

The iron-sulfur cluster site is built by C41, C105, and C107.

The protein belongs to the HesB/IscA family. Homodimer. It depends on iron-sulfur cluster as a cofactor.

In terms of biological role, required for insertion of 4Fe-4S clusters for at least IspG. In Actinobacillus pleuropneumoniae serotype 5b (strain L20), this protein is Iron-sulfur cluster insertion protein ErpA.